Consider the following 341-residue polypeptide: Methionine import ATP-binding protein MetN 2 (341 aa).

An ABC transporter domain is found at 2–241; it reads IQFKNISKHY…PQHPTTKTFI (240 aa). 38–45 is a binding site for ATP; the sequence is GYSGAGKS.

The protein belongs to the ABC transporter superfamily. Methionine importer (TC 3.A.1.24) family. The complex is composed of two ATP-binding proteins (MetN), two transmembrane proteins (MetI) and a solute-binding protein (MetQ).

It localises to the cell inner membrane. The enzyme catalyses L-methionine(out) + ATP + H2O = L-methionine(in) + ADP + phosphate + H(+). It catalyses the reaction D-methionine(out) + ATP + H2O = D-methionine(in) + ADP + phosphate + H(+). In terms of biological role, part of the ABC transporter complex MetNIQ involved in methionine import. Responsible for energy coupling to the transport system. The polypeptide is Methionine import ATP-binding protein MetN 2 (Acinetobacter baylyi (strain ATCC 33305 / BD413 / ADP1)).